The chain runs to 1441 residues: uncharacterized protein (1441 aa).

Disordered stretches follow at residues 1–95, 150–204, 224–289, 401–477, 529–661, 680–760, 776–810, 849–899, 980–1118, 1161–1185, 1209–1321, 1348–1402, and 1421–1441; these read MGFL…EVIS, NGGI…QQQF, KPHQ…GEGE, HSNG…QLHQ, RHES…QPQQ, LNKD…KSQT, RKSSDSLNSSNSNIPITNISPGRQSQQQQQQHIQQ, QQQF…TQQL, RGGS…DNNN, KSLKNSFNNNNNENINNNNNENENN, NIES…YRSY, GHNS…HIFF, and LKFNQQNNSNNNDDLGGSILE. Over residues 19–38 the composition is skewed to low complexity; sequence NDNSFDGGSSSYNNNNNNNN. The span at 39–56 shows a compositional bias: polar residues; sequence QPITYTPTAIRSPNNKTM. Composition is skewed to low complexity over residues 57–91, 153–187, 227–283, 416–445, 555–564, and 572–635; these read SQSQTSIPTLSSSPSLNYPSSPPNNNNNNNNGNGN, ISQPTTPISSPSQPFQSVQPNLIIPTTPTTTTTTP, QQQQ…SLQN, NNNNNNNNNNNNNNGNNSNNGNINNNGINN, GNTDGVNIDN, and NNNN…TNNT. The span at 636–645 shows a compositional bias: polar residues; the sequence is ATPSVINGDS. 2 stretches are compositionally biased toward low complexity: residues 648–661 and 680–700; these read QEQPQQSQQQQPQQ and LNKDSNNVDNNNNNNNIDDNN. The segment covering 703–720 has biased composition (basic and acidic residues); that stretch reads SREEMENILKKSQQDSNK. The span at 729–751 shows a compositional bias: polar residues; that stretch reads EDSNSGSPTFQDFQSSAAASNVS. Composition is skewed to low complexity over residues 780–810 and 849–880; these read DSLNSSNSNIPITNISPGRQSQQQQQQHIQQ and QQQFQFQQNSVSSQSLQSLNGGNNNNNSNSGS. A compositionally biased stretch (gly residues) spans 881-892; that stretch reads INGGSNSGGGGV. The segment covering 981 to 994 has biased composition (polar residues); that stretch reads GGSTNRTTPPFLTP. A compositionally biased stretch (low complexity) spans 995-1067; it reads NTSQTNLSSL…NKQTANNTTN (73 aa). A compositionally biased stretch (polar residues) spans 1068 to 1087; it reads DFSFDQNTDLRSSTNSLTIG. A compositionally biased stretch (low complexity) spans 1088–1118; the sequence is SNSNFSSLKNSLNLENPENNNNPDKNVDNNN. 2 stretches are compositionally biased toward low complexity: residues 1225-1249 and 1257-1291; these read DNNNSSSNNNNNNLKNSNSNNSLRN and NISNNNNNNNNNNNNNNNNNNNNNNNNNNNNNNNE. Positions 1362 to 1373 are enriched in basic and acidic residues; that stretch reads RHKDSIGDKEMD.

This is an uncharacterized protein from Dictyostelium discoideum (Social amoeba).